Here is a 633-residue protein sequence, read N- to C-terminus: DNA polymerase DpoZ (633 aa).

This sequence belongs to the DNA polymerase type-A family. DpoZ subfamily.

The catalysed reaction is DNA(n) + a 2'-deoxyribonucleoside 5'-triphosphate = DNA(n+1) + diphosphate. It catalyses the reaction dZTP + DNA(n) = DNA(n)-Z + diphosphate. In terms of biological role, DNA polymerase that preferentially incorporates the non-canonical base aminoadenine/dZTP instead of adenine into the synthesized DNA. More efficient in using dZTP instead of dATP as a substrate. In addition to this preference for dZTP, the phage also encodes a dATP triphosphohydrolase that removes dATP and its precursor dADP from the nucleotide pool of the host. This is DNA polymerase DpoZ (dpoZ) from Vibrio phage phiVC8.